The sequence spans 338 residues: Tetraacyldisaccharide 4'-kinase (338 aa).

An ATP-binding site is contributed by 61 to 68; it reads TLGGTGKT.

It belongs to the LpxK family.

The catalysed reaction is a lipid A disaccharide + ATP = a lipid IVA + ADP + H(+). Its pathway is glycolipid biosynthesis; lipid IV(A) biosynthesis; lipid IV(A) from (3R)-3-hydroxytetradecanoyl-[acyl-carrier-protein] and UDP-N-acetyl-alpha-D-glucosamine: step 6/6. Functionally, transfers the gamma-phosphate of ATP to the 4'-position of a tetraacyldisaccharide 1-phosphate intermediate (termed DS-1-P) to form tetraacyldisaccharide 1,4'-bis-phosphate (lipid IVA). This Nitrosococcus oceani (strain ATCC 19707 / BCRC 17464 / JCM 30415 / NCIMB 11848 / C-107) protein is Tetraacyldisaccharide 4'-kinase.